The sequence spans 194 residues: Fe/S biogenesis protein NfuA (194 aa).

[4Fe-4S] cluster is bound by residues Cys151 and Cys154.

The protein belongs to the NfuA family. Homodimer. The cofactor is [4Fe-4S] cluster.

In terms of biological role, involved in iron-sulfur cluster biogenesis. Binds a 4Fe-4S cluster, can transfer this cluster to apoproteins, and thereby intervenes in the maturation of Fe/S proteins. Could also act as a scaffold/chaperone for damaged Fe/S proteins. The chain is Fe/S biogenesis protein NfuA from Aliivibrio fischeri (strain ATCC 700601 / ES114) (Vibrio fischeri).